Consider the following 67-residue polypeptide: Small, acid-soluble spore protein B (67 aa).

This sequence belongs to the alpha/beta-type SASP family.

In terms of biological role, SASP are bound to spore DNA. They are double-stranded DNA-binding proteins that cause DNA to change to an a-like conformation. They protect the DNA backbone from chemical and enzymatic cleavage and are thus involved in dormant spore's high resistance to UV light. The protein is Small, acid-soluble spore protein B (sspB) of Bacillus subtilis (strain 168).